The following is a 231-amino-acid chain: Dephospho-CoA kinase domain-containing protein (231 aa).

The DPCK domain maps to leucine 3–phenylalanine 207. ATP is bound at residue glycine 8–serine 15.

Belongs to the CoaE family.

This chain is Dephospho-CoA kinase domain-containing protein (DCAKD), found in Homo sapiens (Human).